The primary structure comprises 122 residues: Nodulation protein NolR (122 aa).

In terms of domain architecture, HTH arsR-type spans Glu-15–Thr-109. Positions Val-49–Ser-68 form a DNA-binding region, H-T-H motif.

In terms of assembly, binds to the operator site in homodimeric form.

Negative transacting factor controlling the nod regulon. May control the expression of nodD1, nodD2, nodD3 and nodABC genes. The chain is Nodulation protein NolR (nolR) from Rhizobium meliloti (Ensifer meliloti).